Reading from the N-terminus, the 449-residue chain is Histone PARylation factor 1-like (449 aa).

The segment at Lys-3 to Lys-28 adopts a CCHC-type zinc-finger fold. Residues Ala-18–Glu-93 form a disordered region. 2 stretches are compositionally biased toward basic and acidic residues: residues Lys-28–Lys-41 and Glu-54–Ser-69. Ser-72 is modified (phosphoserine). The active-site Proton donor is Glu-384.

This sequence belongs to the HPF1 family.

The protein localises to the chromosome. Its subcellular location is the nucleus. In terms of biological role, cofactor for serine ADP-ribosylation that confers serine specificity on Parp. Switches the amino acid specificity of Parp from aspartate or glutamate to serine residues. Acts by completing the active site of Parp: forms a composite active site composed of residues from HPF1/CG1218 and Parp. The chain is Histone PARylation factor 1-like from Drosophila melanogaster (Fruit fly).